A 404-amino-acid chain; its full sequence is Probable tRNA sulfurtransferase (404 aa).

The region spanning 61–166 is the THUMP domain; sequence EAISERLKDV…SGYSYIMCGE (106 aa). ATP is bound by residues 184–185, 209–210, arginine 266, glycine 288, and glutamine 297; these read LL and HF.

It belongs to the ThiI family.

The protein resides in the cytoplasm. The enzyme catalyses [ThiI sulfur-carrier protein]-S-sulfanyl-L-cysteine + a uridine in tRNA + 2 reduced [2Fe-2S]-[ferredoxin] + ATP + H(+) = [ThiI sulfur-carrier protein]-L-cysteine + a 4-thiouridine in tRNA + 2 oxidized [2Fe-2S]-[ferredoxin] + AMP + diphosphate. The catalysed reaction is [ThiS sulfur-carrier protein]-C-terminal Gly-Gly-AMP + S-sulfanyl-L-cysteinyl-[cysteine desulfurase] + AH2 = [ThiS sulfur-carrier protein]-C-terminal-Gly-aminoethanethioate + L-cysteinyl-[cysteine desulfurase] + A + AMP + 2 H(+). It participates in cofactor biosynthesis; thiamine diphosphate biosynthesis. Its function is as follows. Catalyzes the ATP-dependent transfer of a sulfur to tRNA to produce 4-thiouridine in position 8 of tRNAs, which functions as a near-UV photosensor. Also catalyzes the transfer of sulfur to the sulfur carrier protein ThiS, forming ThiS-thiocarboxylate. This is a step in the synthesis of thiazole, in the thiamine biosynthesis pathway. The sulfur is donated as persulfide by IscS. The chain is Probable tRNA sulfurtransferase from Bacillus cereus (strain G9842).